The following is a 56-amino-acid chain: Large ribosomal subunit protein bL33 (56 aa).

This sequence belongs to the bacterial ribosomal protein bL33 family.

The sequence is that of Large ribosomal subunit protein bL33 from Ehrlichia canis (strain Jake).